A 97-amino-acid chain; its full sequence is Large ribosomal subunit protein eL21 (97 aa).

This sequence belongs to the eukaryotic ribosomal protein eL21 family.

This Methanoculleus marisnigri (strain ATCC 35101 / DSM 1498 / JR1) protein is Large ribosomal subunit protein eL21.